The chain runs to 191 residues: Ubiquinol-cytochrome c reductase iron-sulfur subunit (191 aa).

The chain crosses the membrane as a helical span at residues 18 to 35; that stretch reads ATAATGVVVTGAAVWPLI. The region spanning 94 to 189 is the Rieske domain; that stretch reads RDTSAENANK…AAFVDETTIK (96 aa). Residues 95–116 are disordered; that stretch reads DTSAENANKPGAEATDENRTLP. [2Fe-2S] cluster is bound by residues C133, H135, C153, and H156. C138 and C155 form a disulfide bridge.

It belongs to the Rieske iron-sulfur protein family. In terms of assembly, the main subunits of complex b-c1 are: cytochrome b, cytochrome c1 and the Rieske protein. [2Fe-2S] cluster serves as cofactor.

It localises to the cell membrane. It catalyses the reaction a quinol + 2 Fe(III)-[cytochrome c](out) = a quinone + 2 Fe(II)-[cytochrome c](out) + 2 H(+)(out). In terms of biological role, component of the ubiquinol-cytochrome c reductase complex (complex III or cytochrome b-c1 complex), which is a respiratory chain that generates an electrochemical potential coupled to ATP synthesis. The chain is Ubiquinol-cytochrome c reductase iron-sulfur subunit (petA) from Rhodobacter capsulatus (strain ATCC BAA-309 / NBRC 16581 / SB1003).